Consider the following 233-residue polypeptide: LOB domain-containing protein 40 (233 aa).

An LOB domain is found at 3–109; the sequence is MSCNGCRVLR…VEAVMRGSPV (107 aa). Over residues 143-160 the composition is skewed to basic and acidic residues; sequence KRRSRGACKEERNVRSLS. Residues 143–183 are disordered; the sequence is KRRSRGACKEERNVRSLSHESSLSHESPVSSEETTTEEPKT. Over residues 161 to 175 the composition is skewed to low complexity; that stretch reads HESSLSHESPVSSEE.

The protein belongs to the LOB domain-containing protein family. As to expression, expressed in roots and flowers.

The chain is LOB domain-containing protein 40 (LBD40) from Arabidopsis thaliana (Mouse-ear cress).